A 726-amino-acid chain; its full sequence is Penicillin-binding protein 1A (726 aa).

The Cytoplasmic segment spans residues 1 to 3 (MKK). Residues 4-24 (LVIGILGIVIALFVGLLVFLI) traverse the membrane as a helical; Signal-anchor for type II membrane protein segment. Over 25-726 (PIYKNLPDPK…SDLNAILGLR (702 aa)) the chain is Periplasmic. The transglycosylase stretch occupies residues 45-213 (SEVYDAKGRL…AKYNPFYHPE (169 aa)). The Proton donor; for transglycosylase activity role is filled by Glu-83. The segment at 379-662 (KYLGGNRAEI…SRVALPIWID (284 aa)) is transpeptidase. Ser-432 (acyl-ester intermediate; for transpeptidase activity) is an active-site residue.

In the N-terminal section; belongs to the glycosyltransferase 51 family. The protein in the C-terminal section; belongs to the transpeptidase family.

It is found in the cell inner membrane. The catalysed reaction is [GlcNAc-(1-&gt;4)-Mur2Ac(oyl-L-Ala-gamma-D-Glu-L-Lys-D-Ala-D-Ala)](n)-di-trans,octa-cis-undecaprenyl diphosphate + beta-D-GlcNAc-(1-&gt;4)-Mur2Ac(oyl-L-Ala-gamma-D-Glu-L-Lys-D-Ala-D-Ala)-di-trans,octa-cis-undecaprenyl diphosphate = [GlcNAc-(1-&gt;4)-Mur2Ac(oyl-L-Ala-gamma-D-Glu-L-Lys-D-Ala-D-Ala)](n+1)-di-trans,octa-cis-undecaprenyl diphosphate + di-trans,octa-cis-undecaprenyl diphosphate + H(+). The enzyme catalyses Preferential cleavage: (Ac)2-L-Lys-D-Ala-|-D-Ala. Also transpeptidation of peptidyl-alanyl moieties that are N-acyl substituents of D-alanine.. It functions in the pathway cell wall biogenesis; peptidoglycan biosynthesis. The sequence is that of Penicillin-binding protein 1A (mrcA) from Aquifex aeolicus (strain VF5).